Here is a 164-residue protein sequence, read N- to C-terminus: Transcription elongation factor GreA (164 aa).

Residues 50–75 (YHAAREEQGQQEARIRQLQDLLNIAK) are a coiled coil.

It belongs to the GreA/GreB family.

Functionally, necessary for efficient RNA polymerase transcription elongation past template-encoded arresting sites. The arresting sites in DNA have the property of trapping a certain fraction of elongating RNA polymerases that pass through, resulting in locked ternary complexes. Cleavage of the nascent transcript by cleavage factors such as GreA or GreB allows the resumption of elongation from the new 3'terminus. GreA releases sequences of 2 to 3 nucleotides. The polypeptide is Transcription elongation factor GreA (Mycobacterium leprae (strain Br4923)).